The primary structure comprises 460 residues: UDP-N-acetylmuramoylalanine--D-glutamate ligase (460 aa).

115–121 (GTNGKTT) provides a ligand contact to ATP.

This sequence belongs to the MurCDEF family.

It is found in the cytoplasm. The enzyme catalyses UDP-N-acetyl-alpha-D-muramoyl-L-alanine + D-glutamate + ATP = UDP-N-acetyl-alpha-D-muramoyl-L-alanyl-D-glutamate + ADP + phosphate + H(+). It participates in cell wall biogenesis; peptidoglycan biosynthesis. Its function is as follows. Cell wall formation. Catalyzes the addition of glutamate to the nucleotide precursor UDP-N-acetylmuramoyl-L-alanine (UMA). This chain is UDP-N-acetylmuramoylalanine--D-glutamate ligase, found in Salinibacter ruber (strain DSM 13855 / M31).